A 59-amino-acid polypeptide reads, in one-letter code: Insulin (59 aa).

3 disulfide bridges follow: C7–C45, C19–C58, and C44–C49.

The protein belongs to the insulin family. In terms of assembly, heterodimer of a B chain and an A chain linked by two disulfide bonds.

Its subcellular location is the secreted. Functionally, insulin decreases blood glucose concentration. It increases cell permeability to monosaccharides, amino acids and fatty acids. It accelerates glycolysis, the pentose phosphate cycle, and glycogen synthesis in liver. The protein is Insulin (ins) of Chimaera monstrosa (Rabbit fish).